The following is a 550-amino-acid chain: Dihydroxy-acid dehydratase (550 aa).

Asp78 is a Mg(2+) binding site. Residue Cys119 participates in [2Fe-2S] cluster binding. The Mg(2+) site is built by Asp120 and Lys121. The residue at position 121 (Lys121) is an N6-carboxylysine. Cys191 is a binding site for [2Fe-2S] cluster. Glu440 serves as a coordination point for Mg(2+). Residue Ser466 is the Proton acceptor of the active site.

It belongs to the IlvD/Edd family. As to quaternary structure, homodimer. Requires [2Fe-2S] cluster as cofactor. Mg(2+) is required as a cofactor.

It catalyses the reaction (2R)-2,3-dihydroxy-3-methylbutanoate = 3-methyl-2-oxobutanoate + H2O. The catalysed reaction is (2R,3R)-2,3-dihydroxy-3-methylpentanoate = (S)-3-methyl-2-oxopentanoate + H2O. The protein operates within amino-acid biosynthesis; L-isoleucine biosynthesis; L-isoleucine from 2-oxobutanoate: step 3/4. Its pathway is amino-acid biosynthesis; L-valine biosynthesis; L-valine from pyruvate: step 3/4. Functions in the biosynthesis of branched-chain amino acids. Catalyzes the dehydration of (2R,3R)-2,3-dihydroxy-3-methylpentanoate (2,3-dihydroxy-3-methylvalerate) into 2-oxo-3-methylpentanoate (2-oxo-3-methylvalerate) and of (2R)-2,3-dihydroxy-3-methylbutanoate (2,3-dihydroxyisovalerate) into 2-oxo-3-methylbutanoate (2-oxoisovalerate), the penultimate precursor to L-isoleucine and L-valine, respectively. This is Dihydroxy-acid dehydratase from Methanococcus maripaludis (strain C7 / ATCC BAA-1331).